A 383-amino-acid chain; its full sequence is tRNA-specific 2-thiouridylase MnmA (383 aa).

Residues 9–16 and Met35 each bind ATP; that span reads GMSGGVDS. The tract at residues 95-97 is interaction with target base in tRNA; it reads NPD. Cys100 (nucleophile) is an active-site residue. Cys100 and Cys196 are oxidised to a cystine. Gly124 contributes to the ATP binding site. The interval 146 to 148 is interaction with tRNA; the sequence is KDQ. The active-site Cysteine persulfide intermediate is Cys196. Residues 308–309 are interaction with tRNA; that stretch reads RY.

It belongs to the MnmA/TRMU family.

The protein localises to the cytoplasm. It catalyses the reaction S-sulfanyl-L-cysteinyl-[protein] + uridine(34) in tRNA + AH2 + ATP = 2-thiouridine(34) in tRNA + L-cysteinyl-[protein] + A + AMP + diphosphate + H(+). Its function is as follows. Catalyzes the 2-thiolation of uridine at the wobble position (U34) of tRNA, leading to the formation of s(2)U34. The polypeptide is tRNA-specific 2-thiouridylase MnmA (Burkholderia pseudomallei (strain 668)).